The sequence spans 433 residues: Protein arginine N-methyltransferase 2 (433 aa).

The interval 1-27 (MSTSGCSSEKSDFQDSTEGEEEEDTQS) is disordered. Over residues 15–26 (DSTEGEEEEDTQ) the composition is skewed to acidic residues. Residues 30-89 (LCMREYVVIRDYMAADATQLSLCFGDKVLLLSAVTQDWWWVKHNGICGYVPASYLHDALN) form the SH3 domain. The SAM-dependent MTase PRMT-type domain maps to 102–416 (DEEYYGSYKT…MSVTLSWVIN (315 aa)). 5 residues coordinate S-adenosyl-L-methionine: H115, R124, G148, E171, and E200. Catalysis depends on residues E214 and E223.

This sequence belongs to the class I-like SAM-binding methyltransferase superfamily. Protein arginine N-methyltransferase family. As to quaternary structure, interacts with ctnnb1.

Its subcellular location is the cytoplasm. The protein resides in the nucleus. It carries out the reaction L-arginyl-[protein] + 2 S-adenosyl-L-methionine = N(omega),N(omega)-dimethyl-L-arginyl-[protein] + 2 S-adenosyl-L-homocysteine + 2 H(+). In terms of biological role, arginine methyltransferase that methylates the guanidino nitrogens of arginyl residues in proteins such as histones. Involved in growth regulation. Involved in embryonic dorsal development. This Xenopus tropicalis (Western clawed frog) protein is Protein arginine N-methyltransferase 2 (prmt2).